We begin with the raw amino-acid sequence, 146 residues long: Oleosin (146 aa).

Alanine 2 is subject to N-acetylalanine. 3 helical membrane passes run 22-42 (ILGF…TGLT), 56-76 (VLIF…VAVA), and 77-97 (GFLS…WLYN). Residues 55-66 (PVLIFFSPILIP) carry the Proline-knot motif.

This sequence belongs to the oleosin family. Expressed in pollen (at protein level).

The protein resides in the lipid droplet. The protein localises to the membrane. This is Oleosin from Pinus elliottii (Slash pine).